The primary structure comprises 259 residues: Small ribosomal subunit protein uS2 (259 aa).

Belongs to the universal ribosomal protein uS2 family.

In Streptococcus pneumoniae (strain CGSP14), this protein is Small ribosomal subunit protein uS2.